The sequence spans 480 residues: Membrane-bound lytic murein transglycosylase F (480 aa).

The N-terminal stretch at 1 to 15 (MNRILLTLLTLTLLA) is a signal peptide. Positions 16–259 (GCQRVAVEET…HLDEKYFAHV (244 aa)) are non-LT domain. An LT domain region spans residues 260–480 (KRFDYVDTRA…EKAITGAQPE (221 aa)). The active site involves Glu304.

This sequence in the N-terminal section; belongs to the bacterial solute-binding protein 3 family. It in the C-terminal section; belongs to the transglycosylase Slt family.

It is found in the cell outer membrane. The catalysed reaction is Exolytic cleavage of the (1-&gt;4)-beta-glycosidic linkage between N-acetylmuramic acid (MurNAc) and N-acetylglucosamine (GlcNAc) residues in peptidoglycan, from either the reducing or the non-reducing ends of the peptidoglycan chains, with concomitant formation of a 1,6-anhydrobond in the MurNAc residue.. Murein-degrading enzyme that degrades murein glycan strands and insoluble, high-molecular weight murein sacculi, with the concomitant formation of a 1,6-anhydromuramoyl product. Lytic transglycosylases (LTs) play an integral role in the metabolism of the peptidoglycan (PG) sacculus. Their lytic action creates space within the PG sacculus to allow for its expansion as well as for the insertion of various structures such as secretion systems and flagella. This Shewanella woodyi (strain ATCC 51908 / MS32) protein is Membrane-bound lytic murein transglycosylase F.